We begin with the raw amino-acid sequence, 199 residues long: Ribonuclease HI (199 aa).

Residues 1 to 68 (MPVVECDIQT…TAVVQPDRGG (68 aa)) form a not required for RNase H activity region. The 132-residue stretch at 66 to 197 (RGGRVHAYFD…ADALANEALD (132 aa)) folds into the RNase H type-1 domain. The segment at 69–199 (RVHAYFDGAS…ALANEALDDA (131 aa)) is as active as intact RNase H. Mg(2+) contacts are provided by aspartate 75, glutamate 115, aspartate 139, and aspartate 189. The Mn(2+) site is built by aspartate 75, glutamate 115, aspartate 139, and aspartate 189.

This sequence belongs to the RNase H family. Requires Mn(2+) as cofactor. The cofactor is Mg(2+). Co(2+) serves as cofactor. It depends on Ni(2+) as a cofactor.

Its subcellular location is the cytoplasm. It carries out the reaction Endonucleolytic cleavage to 5'-phosphomonoester.. In terms of biological role, nuclease that specifically degrades the RNA of RNA-DNA hybrids; seems to act exonucleolytically on RNA/DNA hybrids. Endonucleolytically removes RNA primers from the Okazaki fragments of lagging strand synthesis on its own. Complements the temperature-sensitive phenotype of an E.coli double rnhA/rnhB (RNase H) disruption mutant. This Halobacterium salinarum (strain ATCC 700922 / JCM 11081 / NRC-1) (Halobacterium halobium) protein is Ribonuclease HI (rnhA).